Reading from the N-terminus, the 1301-residue chain is Dentin sialophosphoprotein (1301 aa).

The N-terminal stretch at 1–15 is a signal peptide; sequence MKIITYFCIWAVAWA. 2 N-linked (GlcNAc...) asparagine glycosylation sites follow: asparagine 41 and asparagine 49. The segment at 55 to 89 is disordered; sequence KESGVLVHEGDRGRQENTQDGHKGEGNGSKWAEVG. Over residues 62–79 the composition is skewed to basic and acidic residues; sequence HEGDRGRQENTQDGHKGE. N-linked (GlcNAc...) asparagine glycans are attached at residues asparagine 81, asparagine 130, asparagine 150, asparagine 190, asparagine 191, asparagine 209, and asparagine 222. The segment covering 146–165 has biased composition (polar residues); it reads AGATNRSNTNGNTDKNTQNG. Residues 146-171 are disordered; sequence AGATNRSNTNGNTDKNTQNGDVGDAG. Residues 202 to 1301 form a disordered region; the sequence is NSCRNEGNTS…SDSNHSTSDD (1100 aa). Residues 203–221 are compositionally biased toward polar residues; sequence SCRNEGNTSEITPQINSKR. Acidic residues predominate over residues 251-267; it reads ADEDEDEGSGDDEDEEA. Residue serine 259 is modified to Phosphoserine; by CK1. The span at 271–280 shows a compositional bias: polar residues; sequence KDSSNNSKGQ. A glycan (N-linked (GlcNAc...) asparagine) is linked at asparagine 275. 2 stretches are compositionally biased toward basic and acidic residues: residues 281–293 and 300–327; these read EGQD…DHDS and DSKE…KSEE. Phosphoserine is present on serine 301. An N-linked (GlcNAc...) asparagine glycan is attached at asparagine 336. Positions 340–377 are enriched in basic and acidic residues; sequence RIEDTQKLNHRESKRVENRITKESETHAVGKSQDKGIE. N-linked (GlcNAc...) asparagine glycosylation occurs at asparagine 387. Basic and acidic residues predominate over residues 388-404; sequence ITKEVGKGNEGKEDKGQ. Low complexity-rich tracts occupy residues 439 to 452 and 462 to 487; these read SNTG…GYDS and GDDP…NSSS. Residues 488-490 carry the Cell attachment site motif; that stretch reads RGD. The segment covering 488 to 506 has biased composition (polar residues); it reads RGDASYNSDESKDNGNGSD. The span at 518–534 shows a compositional bias: low complexity; the sequence is TSDTNNSDSNGNGNNGN. Over residues 536 to 549 the composition is skewed to basic and acidic residues; the sequence is DNDKSDSGKGKSDS. Residues 555–564 are compositionally biased toward low complexity; that stretch reads SDSSNSSDSS. Acidic residues predominate over residues 581–595; sequence DSSDSDSSDSSDSDS. Residues 596–619 are compositionally biased toward low complexity; the sequence is SDSSNSSDSSDSSDSSDSSDSSDS. Positions 620–642 are enriched in basic and acidic residues; sequence SDSKSDSSKSESDSSDSDSKSDS. 4 stretches are compositionally biased toward low complexity: residues 643-705, 715-1264, 1272-1284, and 1292-1301; these read SDSN…SDSS, SSDS…STSD, QSKS…NGSD, and SDSNHSTSDD.

Interacts with FBLN7. In terms of processing, DSP is glycosylated. As to expression, expressed in teeth. DPP is synthesized by odontoblast and transiently expressed by pre-ameloblasts.

The protein resides in the secreted. The protein localises to the extracellular space. It is found in the extracellular matrix. Its function is as follows. DSP may be an important factor in dentinogenesis. DPP may bind high amount of calcium and facilitate initial mineralization of dentin matrix collagen as well as regulate the size and shape of the crystals. This chain is Dentin sialophosphoprotein (DSPP), found in Homo sapiens (Human).